A 161-amino-acid polypeptide reads, in one-letter code: Cytochrome c-type biogenesis protein CcmE (161 aa).

Residues 1-8 lie on the Cytoplasmic side of the membrane; sequence MNPRRKKR. The helical; Signal-anchor for type II membrane protein transmembrane segment at 9–29 threads the bilayer; it reads LGLILALFVGISATVGLMLYA. Over 30-161 the chain is Periplasmic; sequence LNQNMDLFYT…TEQQKQGTGQ (132 aa). 2 residues coordinate heme: His129 and Tyr133. Residues 142 to 161 are disordered; that stretch reads MKKTHEPLQYTEQQKQGTGQ. Residues 151 to 161 are compositionally biased toward polar residues; sequence YTEQQKQGTGQ.

Belongs to the CcmE/CycJ family.

It is found in the cell inner membrane. Its function is as follows. Heme chaperone required for the biogenesis of c-type cytochromes. Transiently binds heme delivered by CcmC and transfers the heme to apo-cytochromes in a process facilitated by CcmF and CcmH. This chain is Cytochrome c-type biogenesis protein CcmE, found in Aliivibrio fischeri (strain ATCC 700601 / ES114) (Vibrio fischeri).